The sequence spans 212 residues: Glycerol-3-phosphate acyltransferase (212 aa).

Transmembrane regions (helical) follow at residues 10 to 30 (FAALLIVLAYLIGCVPFAVVV), 90 to 110 (GYGLVLIAVFLGHLYPVSLGF), 124 to 144 (FAVSPWLALATVATWLLVAVV), 150 to 170 (LAALVAAFLAPVYYFFGGGTI), and 171 to 191 (WPLNAPTAAALVGVSALLFYR).

This sequence belongs to the PlsY family. Probably interacts with PlsX.

The protein localises to the cell inner membrane. It catalyses the reaction an acyl phosphate + sn-glycerol 3-phosphate = a 1-acyl-sn-glycero-3-phosphate + phosphate. It functions in the pathway lipid metabolism; phospholipid metabolism. In terms of biological role, catalyzes the transfer of an acyl group from acyl-phosphate (acyl-PO(4)) to glycerol-3-phosphate (G3P) to form lysophosphatidic acid (LPA). This enzyme utilizes acyl-phosphate as fatty acyl donor, but not acyl-CoA or acyl-ACP. The chain is Glycerol-3-phosphate acyltransferase from Bordetella avium (strain 197N).